A 77-amino-acid polypeptide reads, in one-letter code: Small ribosomal subunit protein uS17 (77 aa).

It belongs to the universal ribosomal protein uS17 family. As to quaternary structure, part of the 30S ribosomal subunit.

Its function is as follows. One of the primary rRNA binding proteins, it binds specifically to the 5'-end of 16S ribosomal RNA. The polypeptide is Small ribosomal subunit protein uS17 (Rickettsia prowazekii (strain Madrid E)).